The sequence spans 265 residues: Undecaprenyl-diphosphatase (265 aa).

The next 8 helical transmembrane spans lie at 14-34, 40-60, 79-99, 112-132, 141-161, 182-202, 217-237, and 242-262; these read GLGE…PWLF, SLVF…VYFW, GKLF…GYLF, LLIA…DSIA, MNVF…FPGI, AKFS…VSLL, IGFF…LGIV, and FKIF…FYLL.

The protein belongs to the UppP family.

It localises to the cell membrane. The enzyme catalyses di-trans,octa-cis-undecaprenyl diphosphate + H2O = di-trans,octa-cis-undecaprenyl phosphate + phosphate + H(+). Functionally, catalyzes the dephosphorylation of undecaprenyl diphosphate (UPP). Confers resistance to bacitracin. This chain is Undecaprenyl-diphosphatase, found in Caldicellulosiruptor bescii (strain ATCC BAA-1888 / DSM 6725 / KCTC 15123 / Z-1320) (Anaerocellum thermophilum).